The chain runs to 105 residues: UPF0060 membrane protein Reut_B3679 (105 aa).

4 helical membrane passes run 4–24, 28–48, 60–80, and 82–102; these read IALY…PYLW, GASA…AWLL, AAYG…VDGV, and PSAW…IIVF.

It belongs to the UPF0060 family.

It localises to the cell inner membrane. This Cupriavidus pinatubonensis (strain JMP 134 / LMG 1197) (Cupriavidus necator (strain JMP 134)) protein is UPF0060 membrane protein Reut_B3679.